The following is a 376-amino-acid chain: Probable cysteine protease RDL3 (376 aa).

Residues 1 to 27 form the signal peptide; sequence MAISFRTLALLTLSVLLISISLGVVTA. A propeptide spans 28–126 (activation peptide); that stretch reads TESQRNEGEV…ERYQYKEGDV (99 aa). Asparagine 80 carries N-linked (GlcNAc...) asparagine glycosylation. Disulfide bonds link cysteine 149-cysteine 192 and cysteine 183-cysteine 226. The active site involves cysteine 152. N-linked (GlcNAc...) asparagine glycosylation is present at asparagine 270. Residues cysteine 283 and cysteine 336 are joined by a disulfide bond. Residues histidine 290 and asparagine 311 contribute to the active site. N-linked (GlcNAc...) asparagine glycosylation is present at asparagine 349.

The protein belongs to the peptidase C1 family. As to expression, expressed in root hairs.

Probable thiol protease. The chain is Probable cysteine protease RDL3 from Arabidopsis thaliana (Mouse-ear cress).